Reading from the N-terminus, the 423-residue chain is Phospholipase A1-IIalpha (423 aa).

Positions 194–217 form a coiled coil; sequence SAQEQVQGELKRLLELYKDEEISI. Catalysis depends on Ser-223, which acts as the Acyl-ester intermediate. Catalysis depends on charge relay system residues Ser-223, Asp-290, and His-327. Residues 399 to 423 form a disordered region; it reads HDDDVDADDNDDSSTSNQLQELNTD. The span at 401-410 shows a compositional bias: acidic residues; sequence DDVDADDNDD. Over residues 411–423 the composition is skewed to polar residues; the sequence is SSTSNQLQELNTD.

It belongs to the AB hydrolase superfamily. Lipase family.

Its subcellular location is the cytoplasm. In terms of biological role, acylhydrolase that catalyzes the hydrolysis of phospholipids at the sn-1 position. The sequence is that of Phospholipase A1-IIalpha from Arabidopsis thaliana (Mouse-ear cress).